Reading from the N-terminus, the 207-residue chain is Small ribosomal subunit protein uS4 (207 aa).

Residues 31 to 54 (KCKLDSKPGQHGRTSGARTSDYGN) are disordered. Residues 42–53 (GRTSGARTSDYG) show a composition bias toward polar residues. Residues 97–160 (SRLDNVVYRM…KKQVRIAEAL (64 aa)) form the S4 RNA-binding domain.

This sequence belongs to the universal ribosomal protein uS4 family. Part of the 30S ribosomal subunit. Contacts protein S5. The interaction surface between S4 and S5 is involved in control of translational fidelity.

Functionally, one of the primary rRNA binding proteins, it binds directly to 16S rRNA where it nucleates assembly of the body of the 30S subunit. In terms of biological role, with S5 and S12 plays an important role in translational accuracy. This is Small ribosomal subunit protein uS4 from Cupriavidus metallidurans (strain ATCC 43123 / DSM 2839 / NBRC 102507 / CH34) (Ralstonia metallidurans).